The following is a 354-amino-acid chain: Probable alcohol acetyltransferase (354 aa).

Residues serine 124 and histidine 293 each act as charge relay system in the active site.

Belongs to the AB hydrolase superfamily.

Functionally, probable alcohol acetyltransferase that uses acetyl-CoA to synthesize acetate esters from various alcohols. Not involved in the synthesis of ethyl acetate. The polypeptide is Probable alcohol acetyltransferase (EAT2) (Cyberlindnera jadinii (strain ATCC 18201 / CBS 1600 / BCRC 20928 / JCM 3617 / NBRC 0987 / NRRL Y-1542) (Torula yeast)).